Reading from the N-terminus, the 194-residue chain is Peptidyl-tRNA hydrolase (194 aa).

Position 16 (Tyr16) interacts with tRNA. His21 acts as the Proton acceptor in catalysis. Tyr67, Asn69, and Asn115 together coordinate tRNA.

The protein belongs to the PTH family. Monomer.

The protein resides in the cytoplasm. The enzyme catalyses an N-acyl-L-alpha-aminoacyl-tRNA + H2O = an N-acyl-L-amino acid + a tRNA + H(+). In terms of biological role, hydrolyzes ribosome-free peptidyl-tRNAs (with 1 or more amino acids incorporated), which drop off the ribosome during protein synthesis, or as a result of ribosome stalling. Its function is as follows. Catalyzes the release of premature peptidyl moieties from peptidyl-tRNA molecules trapped in stalled 50S ribosomal subunits, and thus maintains levels of free tRNAs and 50S ribosomes. The sequence is that of Peptidyl-tRNA hydrolase from Synechocystis sp. (strain ATCC 27184 / PCC 6803 / Kazusa).